The primary structure comprises 157 residues: ATP synthase subunit b (157 aa).

A helical membrane pass occupies residues 1–21 (MHFLDESFWLAISFIIFVYLI).

It belongs to the ATPase B chain family. As to quaternary structure, F-type ATPases have 2 components, F(1) - the catalytic core - and F(0) - the membrane proton channel. F(1) has five subunits: alpha(3), beta(3), gamma(1), delta(1), epsilon(1). F(0) has three main subunits: a(1), b(2) and c(10-14). The alpha and beta chains form an alternating ring which encloses part of the gamma chain. F(1) is attached to F(0) by a central stalk formed by the gamma and epsilon chains, while a peripheral stalk is formed by the delta and b chains.

The protein localises to the cell inner membrane. Functionally, f(1)F(0) ATP synthase produces ATP from ADP in the presence of a proton or sodium gradient. F-type ATPases consist of two structural domains, F(1) containing the extramembraneous catalytic core and F(0) containing the membrane proton channel, linked together by a central stalk and a peripheral stalk. During catalysis, ATP synthesis in the catalytic domain of F(1) is coupled via a rotary mechanism of the central stalk subunits to proton translocation. Its function is as follows. Component of the F(0) channel, it forms part of the peripheral stalk, linking F(1) to F(0). This chain is ATP synthase subunit b, found in Rickettsia bellii (strain RML369-C).